We begin with the raw amino-acid sequence, 532 residues long: MTHAPISPVVLVILDGWGYRPQRSDNAIAMAKTPIMDSLWEVYPHTLIRTSAKDVGLPEGQMGNSEVGHLNIGAGRVVPQELVRISDAIEDGSIQQNQALLKLCAEIRPKKSKLHLIGLCSEGGVHSHLDHLLGLLDLAKVQGISDVCIHVITDGRDTNVTDGMPAIKRIQEHINKIKLGRMVTLSGRYYAMDRDRRWDRVEKAYNVMTSDQGIDGRSITEVLQAFYDQNITDEFIPPTRIAPGAIEAGDGVIFYNFRPDRARQLCYALTMPDFEDFDRDLISPLSFVTFTQYDPKLPVDVAFAPQNLNNILGQVIAQQGLKQFRCAETEKYPHVTYFFNGGLEKPFEGEVRELIPSPKVATYDQAPAMSAAAVTTSVCGAIEQGIYSLVVVNYANPDMVGHTGILDAAMKAVETVDLCLAKLLSSVNKLGGTVLITADHGNAETMVDESGNPWTAHTTNPVPLILIEGEGRKIPGHGGDVQLRDDGRLADIAPTILEILSIPVPVEMTGRSLIKPAEVEIKASRTPVRISL.

Residues aspartate 15 and serine 65 each contribute to the Mn(2+) site. Residue serine 65 is the Phosphoserine intermediate of the active site. Residues histidine 126, 156-157 (RD), arginine 188, arginine 194, 258-261 (RPDR), and lysine 331 contribute to the substrate site. Mn(2+) contacts are provided by aspartate 398, histidine 402, aspartate 439, histidine 440, and histidine 457.

Belongs to the BPG-independent phosphoglycerate mutase family. Monomer. It depends on Mn(2+) as a cofactor.

It catalyses the reaction (2R)-2-phosphoglycerate = (2R)-3-phosphoglycerate. It participates in carbohydrate degradation; glycolysis; pyruvate from D-glyceraldehyde 3-phosphate: step 3/5. In terms of biological role, catalyzes the interconversion of 2-phosphoglycerate and 3-phosphoglycerate. This Microcystis aeruginosa (strain NIES-843 / IAM M-2473) protein is 2,3-bisphosphoglycerate-independent phosphoglycerate mutase.